Consider the following 110-residue polypeptide: UPF0122 protein YlxM (110 aa).

It belongs to the UPF0122 family.

Might take part in the signal recognition particle (SRP) pathway. This is inferred from the conservation of its genetic proximity to ftsY/ffh. May be a regulatory protein. This Bacillus subtilis (strain 168) protein is UPF0122 protein YlxM (ylxM).